Here is a 188-residue protein sequence, read N- to C-terminus: Mitochondrial import inner membrane translocase subunit TIM23-2 (188 aa).

4 helical membrane-spanning segments follow: residues 64 to 84 (TGTA…ITGV), 112 to 131 (GNRI…GIVA), 138 to 154 (VWTS…VCRA), and 161 to 178 (AAVA…VVAG).

The protein belongs to the Tim17/Tim22/Tim23 family. As to quaternary structure, homomultimer. Component of the TIM17:23 complex at least composed of TIM23, TIM17 and TIM50. The complex interacts with the TIM44 component of the PAM complex. Also part of the NADH-ubiquinone oxidoreductase complex I. Interacts with OEP163, TIM17-2, TIM21, TIM50 and MPPA2. In terms of tissue distribution, expressed in roots and young cotyledons. Detected in leaves and flowers.

The protein resides in the mitochondrion inner membrane. In terms of biological role, essential component of the TIM17:23 complex, a complex that mediates the translocation of transit peptide-containing proteins across the mitochondrial inner membrane. Links the inner and outer membranes. This chain is Mitochondrial import inner membrane translocase subunit TIM23-2 (TIM23-2), found in Arabidopsis thaliana (Mouse-ear cress).